A 285-amino-acid polypeptide reads, in one-letter code: Bifunctional protein FolD (285 aa).

Residues G166–S168 and I232 each bind NADP(+).

It belongs to the tetrahydrofolate dehydrogenase/cyclohydrolase family. As to quaternary structure, homodimer.

It catalyses the reaction (6R)-5,10-methylene-5,6,7,8-tetrahydrofolate + NADP(+) = (6R)-5,10-methenyltetrahydrofolate + NADPH. The enzyme catalyses (6R)-5,10-methenyltetrahydrofolate + H2O = (6R)-10-formyltetrahydrofolate + H(+). The protein operates within one-carbon metabolism; tetrahydrofolate interconversion. Catalyzes the oxidation of 5,10-methylenetetrahydrofolate to 5,10-methenyltetrahydrofolate and then the hydrolysis of 5,10-methenyltetrahydrofolate to 10-formyltetrahydrofolate. The sequence is that of Bifunctional protein FolD from Psychromonas ingrahamii (strain DSM 17664 / CCUG 51855 / 37).